Consider the following 239-residue polypeptide: Chlorate reductase subunit gamma (239 aa).

The first 27 residues, 1–27 (MKTNILVKRMAVIGLAVAAACTGAAAA), serve as a signal peptide directing secretion. Residues histidine 74 and methionine 138 each coordinate heme b.

In terms of assembly, heterotrimer of alpha, beta and gamma subunits. Heme b serves as cofactor.

Its subcellular location is the periplasm. Functionally, may transfer electrons to the iron-sulfur centers of ClrB. The polypeptide is Chlorate reductase subunit gamma (clrC) (Ideonella dechloratans).